The sequence spans 62 residues: Protein translocase subunit SecE (62 aa).

The helical transmembrane segment at 40–60 threads the bilayer; that stretch reads LLVLAVVGVLAYIIQLALTLI.

This sequence belongs to the SecE/SEC61-gamma family. Component of the Sec protein translocase complex. Heterotrimer consisting of SecY (alpha), SecG (beta) and SecE (gamma) subunits. The heterotrimers can form oligomers, although 1 heterotrimer is thought to be able to translocate proteins. Interacts with the ribosome. May interact with SecDF, and other proteins may be involved.

It localises to the cell membrane. In terms of biological role, essential subunit of the Sec protein translocation channel SecYEG. Clamps together the 2 halves of SecY. May contact the channel plug during translocation. The polypeptide is Protein translocase subunit SecE (Saccharolobus solfataricus (strain ATCC 35092 / DSM 1617 / JCM 11322 / P2) (Sulfolobus solfataricus)).